The following is a 207-amino-acid chain: Large ribosomal subunit protein uL3 (207 aa).

The protein belongs to the universal ribosomal protein uL3 family. Part of the 50S ribosomal subunit. Forms a cluster with proteins L14 and L19.

Functionally, one of the primary rRNA binding proteins, it binds directly near the 3'-end of the 23S rRNA, where it nucleates assembly of the 50S subunit. This Fervidobacterium nodosum (strain ATCC 35602 / DSM 5306 / Rt17-B1) protein is Large ribosomal subunit protein uL3.